We begin with the raw amino-acid sequence, 277 residues long: Large ribosomal subunit protein uL2c (277 aa).

The span at 1–11 (MNTRSYSTFTP) shows a compositional bias: polar residues. 2 disordered regions span residues 1 to 47 (MNTR…RNNS) and 254 to 277 (YSAL…RRRK).

It belongs to the universal ribosomal protein uL2 family. As to quaternary structure, part of the 50S ribosomal subunit.

Its subcellular location is the plastid. It localises to the chloroplast. The chain is Large ribosomal subunit protein uL2c (rpl2) from Cryptomeria japonica (Japanese cedar).